A 62-amino-acid polypeptide reads, in one-letter code: 2-hydroxymuconate tautomerase (62 aa).

Catalysis depends on proline 2, which acts as the Proton acceptor; via imino nitrogen. 9–12 (LEGR) lines the substrate pocket.

The protein belongs to the 4-oxalocrotonate tautomerase family. Homohexamer.

It catalyses the reaction (2Z,4E)-2-hydroxyhexa-2,4-dienedioate = (3E)-2-oxohex-3-enedioate. Catalyzes both 1,3- and 1,5-keto-enol tautomerization of the diacid 2-hydroxymuconate (2-hydroxy-2,4-hexadienedioate) to produce 2-oxo-4-hexenedioate. This reaction is highly stereoselective and produces a mixture of stereoisomers, where the (3S)-isomer of 2-oxo-4-hexenedioate predominates. Also catalyzes the tautomerization of 2-hydroxymuconate to 2-oxo-3-hexenedioate, however this reaction is slower and occurs after the tautomerization of 2-hydroxymuconate to 2-oxo-4-hexenedioate. Using 2-hydroxy-2,4-pentadienoate, phenylenolpyruvate, (p-hydroxyphenyl)-enolpyruvate and 2-hydroxy-2,4-heptadiene-1,7-dioate, YwhB is a highly efficient 1,3-keto-enol tautomerase, but clearly not a 1,5-keto-enol tautomerase. Tautomerization of the two monoacids 2-hydroxy-2,4-pentadienoate and phenylenolpyruvate produces a mixture of stereoisomers, where the (3R)-isomers predominate. The polypeptide is 2-hydroxymuconate tautomerase (ywhB) (Bacillus subtilis (strain 168)).